A 338-amino-acid chain; its full sequence is Lipoate-protein ligase A (338 aa).

In terms of domain architecture, BPL/LPL catalytic spans 29-216; the sequence is PATQRVLFLW…AFFAHYGERV (188 aa). ATP contacts are provided by residues Arg71, 76–79, and Lys134; that span reads GAVF. Lys134 lines the (R)-lipoate pocket.

The protein belongs to the LplA family. Monomer.

The protein localises to the cytoplasm. It carries out the reaction L-lysyl-[lipoyl-carrier protein] + (R)-lipoate + ATP = N(6)-[(R)-lipoyl]-L-lysyl-[lipoyl-carrier protein] + AMP + diphosphate + H(+). It functions in the pathway protein modification; protein lipoylation via exogenous pathway; protein N(6)-(lipoyl)lysine from lipoate: step 1/2. Its pathway is protein modification; protein lipoylation via exogenous pathway; protein N(6)-(lipoyl)lysine from lipoate: step 2/2. Its function is as follows. Catalyzes both the ATP-dependent activation of exogenously supplied lipoate to lipoyl-AMP and the transfer of the activated lipoyl onto the lipoyl domains of lipoate-dependent enzymes. The polypeptide is Lipoate-protein ligase A (Escherichia coli O157:H7).